Reading from the N-terminus, the 382-residue chain is Pectinesterase (382 aa).

The signal sequence occupies residues 1–16; the sequence is MKIIVLLLLAVVLASA. The cysteines at positions 153 and 164 are disulfide-linked. Residue Asn179 is glycosylated (N-linked (GlcNAc...) asparagine). Substrate is bound at residue Gln193. Asp216 acts as the Proton donor in catalysis. Residue Asp242 is the Nucleophile of the active site. Substrate is bound by residues Arg306 and Trp308. N-linked (GlcNAc...) asparagine glycans are attached at residues Asn340 and Asn376.

The protein belongs to the pectinesterase family. As to expression, expressed throughout the midgut with particularly strong expression in the ventriculus.

It localises to the secreted. The enzyme catalyses [(1-&gt;4)-alpha-D-galacturonosyl methyl ester](n) + n H2O = [(1-&gt;4)-alpha-D-galacturonosyl](n) + n methanol + n H(+). It participates in glycan metabolism; pectin degradation; 2-dehydro-3-deoxy-D-gluconate from pectin: step 1/5. In terms of biological role, pectinesterase which probably plays an important role in the digestion of plant cell walls. In Sitophilus oryzae (Rice weevil), this protein is Pectinesterase.